A 647-amino-acid chain; its full sequence is Threonine--tRNA ligase (647 aa).

In terms of domain architecture, TGS spans 1–61 (MINITFPDGA…TEDGSIEIVT (61 aa)). A catalytic region spans residues 242–540 (DHRKLGKELD…LIENYKGAFP (299 aa)). Positions 336, 387, and 517 each coordinate Zn(2+).

Belongs to the class-II aminoacyl-tRNA synthetase family. As to quaternary structure, homodimer. Zn(2+) serves as cofactor.

The protein localises to the cytoplasm. It catalyses the reaction tRNA(Thr) + L-threonine + ATP = L-threonyl-tRNA(Thr) + AMP + diphosphate + H(+). Functionally, catalyzes the attachment of threonine to tRNA(Thr) in a two-step reaction: L-threonine is first activated by ATP to form Thr-AMP and then transferred to the acceptor end of tRNA(Thr). Also edits incorrectly charged L-seryl-tRNA(Thr). This chain is Threonine--tRNA ligase, found in Streptococcus pneumoniae (strain 70585).